The following is a 1819-amino-acid chain: Protein REDUCED CHLOROPLAST COVERAGE 2 (1819 aa).

Residues 1 to 17 (MAPKAGKTKPHKSKGEK) are compositionally biased toward basic residues. Disordered stretches follow at residues 1-23 (MAPK…KEEK), 128-180 (KPPV…GACE), 595-619 (QASS…GLGK), and 634-664 (KANK…LEKQ). Basic and acidic residues-rich tracts occupy residues 135-145 (LPKDSEKKESG) and 600-612 (SESK…KPEP). In terms of domain architecture, Clu spans 329–603 (EDETWGGDGG…NQASSKSESK (275 aa)). Residues 649-680 (TDNTSETEDQKELEKQNEEIEKMWKELVTETA) adopt a coiled-coil conformation. TPR repeat units lie at residues 892-925 (GRTL…LVAV), 934-967 (AGAY…NERE), 976-1009 (MKSY…LHLT), 1018-1051 (AATY…NQRL), and 1060-1093 (AASY…LQAK). Disordered stretches follow at residues 1152–1360 (SGIK…PMLS), 1413–1456 (KVNA…SPKE), 1468–1513 (KAFP…SESV), 1527–1573 (LKTV…ASAP), 1616–1670 (STPH…PRIM), and 1731–1809 (LVSE…DYSD). Composition is skewed to basic and acidic residues over residues 1199–1224 (SSDK…EQSK) and 1230–1239 (KLVKPEATVH). A Phosphoserine modification is found at serine 1244. Polar residues predominate over residues 1269–1313 (KLNTNFMNVTQQPSRSRGKSTNFTSPRTSSNELSISVAGSTSSPA). Serine 1320 is modified (phosphoserine). The span at 1343-1354 (LASSACTEQINK) shows a compositional bias: polar residues. Polar residues-rich tracts occupy residues 1496 to 1511 (CLLN…NGSE) and 1536 to 1546 (NLPNGDSSPKS). Residues 1551 to 1566 (DGEKQDACEAQKEMSK) show a composition bias toward basic and acidic residues. Positions 1650–1665 (SFPNSTESNGEANQFN) are enriched in polar residues. Positions 1742 to 1759 (SEEKSGSEEESNNDKNAG) are enriched in basic and acidic residues. The span at 1767–1778 (QETTDTPENGHS) shows a compositional bias: polar residues. Over residues 1785 to 1800 (TTSHETCDEKNGERQG) the composition is skewed to basic and acidic residues.

Expressed in the non-epidermal tissues of the true leaves. Not detected in the vegetative shoot meristem and leaf primordia.

The protein localises to the nucleus. It localises to the cytoplasm. The protein resides in the cytosol. Functionally, negatively regulates meristematic tissue proliferation by integrating developmental signals with carbon source availability. May act as the scaffold of a protein complex, which sequesters key factors that are required for the G2 to M transition in meristematic tissues. Together with REC2, REC3 and FMT/CLU, contributes to the establishment of the cellular volume devoted to the chloroplast compartment. The protein is Protein REDUCED CHLOROPLAST COVERAGE 2 of Arabidopsis thaliana (Mouse-ear cress).